The following is a 65-amino-acid chain: uncharacterized protein (65 aa).

The first 16 residues, 1–16 (MMHVCSLLVSFDVVKS), serve as a signal peptide directing secretion.

This is an uncharacterized protein from Saccharomyces cerevisiae (strain ATCC 204508 / S288c) (Baker's yeast).